Consider the following 217-residue polypeptide: CD99 antigen-like protein 2 (217 aa).

A signal peptide spans 1–25 (MVAWRWACLICLAFSLTTLVQRGSG). Topologically, residues 26-141 (DTGGFRLEDA…DDSGMSAETG (116 aa)) are extracellular. The interval 36–136 (VEGTSSVKQR…GGDNSDDSGM (101 aa)) is disordered. Residues 50-64 (TTTTRRPGATRAPAK) are compositionally biased toward low complexity. The span at 70–82 (AEDDFNLADALDD) shows a compositional bias: acidic residues. Residues 83–92 (QNDRDHDRKK) are compositionally biased toward basic and acidic residues. O-linked (Xyl...) (chondroitin sulfate) serine glycosylation occurs at Ser-134. Residues 142–162 (TIAGVASALAMALIGAVSSYI) traverse the membrane as a helical segment. Residues 163–217 (SYQQKKFCFSIQQGLNADYVKGENLEAVVCEEPQVKYSALQTQSTEPPPPEPPRI) lie on the Cytoplasmic side of the membrane.

It belongs to the CD99 family. O-glycosylated.

Its subcellular location is the cell membrane. It localises to the cell junction. The protein localises to the secreted. In terms of biological role, plays a role in a late step of leukocyte extravasation helping cells to overcome the endothelial basement membrane. Acts at the same site as, but independently of, PECAM1. Homophilic adhesion molecule, but these interactions may not be required for cell aggregation. The polypeptide is CD99 antigen-like protein 2 (CD99L2) (Bos taurus (Bovine)).